The chain runs to 383 residues: Succinyl-diaminopimelate desuccinylase (383 aa).

H68 lines the Zn(2+) pocket. The active site involves D70. Residue D100 participates in Zn(2+) binding. The active-site Proton acceptor is the E130. Residues E131, E159, and H352 each coordinate Zn(2+).

This sequence belongs to the peptidase M20A family. DapE subfamily. As to quaternary structure, homodimer. Requires Zn(2+) as cofactor. Co(2+) serves as cofactor.

It catalyses the reaction N-succinyl-(2S,6S)-2,6-diaminopimelate + H2O = (2S,6S)-2,6-diaminopimelate + succinate. It participates in amino-acid biosynthesis; L-lysine biosynthesis via DAP pathway; LL-2,6-diaminopimelate from (S)-tetrahydrodipicolinate (succinylase route): step 3/3. In terms of biological role, catalyzes the hydrolysis of N-succinyl-L,L-diaminopimelic acid (SDAP), forming succinate and LL-2,6-diaminopimelate (DAP), an intermediate involved in the bacterial biosynthesis of lysine and meso-diaminopimelic acid, an essential component of bacterial cell walls. The protein is Succinyl-diaminopimelate desuccinylase of Granulibacter bethesdensis (strain ATCC BAA-1260 / CGDNIH1).